Reading from the N-terminus, the 547-residue chain is MAAKEVKFGDSARQQMLKGVNVLADAVKVTLGPKGRNVIIEKSYGAPLVTKDGVTVAKEIELENKFENMGAQMVKEVASQANDVAGDGTTTATVLAQAIVAEGLKAVAAGRNPMDLKRGIDQAAAAVVKEIAAQSTPCTDTRAIEQVGTISANSDSSVGRIIAEAMERVGKEGVITVEEGSGFEDELAVVEGMQFDRGYLSPYFINNQETMSAELENPFILLVDKKISNIRDLLPVLEGVAKASRPLLIIAEDVEGEALATLVVNTMRGIVKVAAAKAPGFGDRRKAMLEDIAVLSGATVISEEVGLSLETATLDQLGTAKRVTLTKESTTIVDGAGNAANITSRVEQIRAEIANSSSDYDKEKLQERVAKLAGGVAVIKIGAATELAMKEKKARVDDALHATRAAVEEGVVAGGGVALVRALTKIVDLKGENEDQSVGITLALRAMEAPMRQIVINAGAEASVVVDKVKQGEGNFGYNAATGEYGDMLEMGILDPAKVTRSALQAAASVAGLMITTEAMIADLPKDDAGMPDMGGMGGMGGMGGMM.

Residues T30–P33, K51, D87–T91, G415, N479–A481, and D495 each bind ATP.

This sequence belongs to the chaperonin (HSP60) family. As to quaternary structure, forms a cylinder of 14 subunits composed of two heptameric rings stacked back-to-back. Interacts with the co-chaperonin GroES.

It localises to the cytoplasm. The enzyme catalyses ATP + H2O + a folded polypeptide = ADP + phosphate + an unfolded polypeptide.. Together with its co-chaperonin GroES, plays an essential role in assisting protein folding. The GroEL-GroES system forms a nano-cage that allows encapsulation of the non-native substrate proteins and provides a physical environment optimized to promote and accelerate protein folding. The sequence is that of Chaperonin GroEL from Marinomonas sp. (strain MWYL1).